A 190-amino-acid polypeptide reads, in one-letter code: Inosine triphosphate pyrophosphatase (190 aa).

An ITP-binding site is contributed by 10-15; sequence TGNAKK. Glutamate 40 contacts Mg(2+). Residues lysine 52, 68 to 69, lysine 85, 144 to 147, lysine 167, and 172 to 173 each bind ITP; these read DT, FGWD, and HR.

Belongs to the HAM1 NTPase family. In terms of assembly, homodimer. It depends on Mg(2+) as a cofactor. Requires Mn(2+) as cofactor.

It is found in the cytoplasm. The catalysed reaction is ITP + H2O = IMP + diphosphate + H(+). It catalyses the reaction dITP + H2O = dIMP + diphosphate + H(+). The enzyme catalyses XTP + H2O = XMP + diphosphate + H(+). Pyrophosphatase that hydrolyzes non-canonical purine nucleotides such as inosine triphosphate (ITP), deoxyinosine triphosphate (dITP) or xanthosine 5'-triphosphate (XTP) to their respective monophosphate derivatives. The enzyme does not distinguish between the deoxy- and ribose forms. Probably excludes non-canonical purines from RNA and DNA precursor pools, thus preventing their incorporation into RNA and DNA and avoiding chromosomal lesions. The chain is Inosine triphosphate pyrophosphatase from Culex quinquefasciatus (Southern house mosquito).